Here is a 200-residue protein sequence, read N- to C-terminus: Recombination protein RecR (200 aa).

The segment at 57–72 adopts a C4-type zinc-finger fold; sequence CRQCRTLTEEELCPQC. Residues 80–175 enclose the Toprim domain; sequence TLLCVVEGPM…ITSRIAHGVP (96 aa).

The protein belongs to the RecR family.

Functionally, may play a role in DNA repair. It seems to be involved in an RecBC-independent recombinational process of DNA repair. It may act with RecF and RecO. The polypeptide is Recombination protein RecR (Pseudomonas fluorescens (strain SBW25)).